The chain runs to 340 residues: Gigasin-2 (340 aa).

The signal sequence occupies residues methionine 1–alanine 21. EGF-like domains lie at lysine 22–glycine 57 and threonine 65–glutamate 97. Cystine bridges form between cysteine 25/cysteine 39, cysteine 33/cysteine 45, cysteine 47/cysteine 56, cysteine 69/cysteine 79, cysteine 73/cysteine 85, and cysteine 87/cysteine 96.

As to expression, component of the organic matrix of calcified shell layers.

This Magallana gigas (Pacific oyster) protein is Gigasin-2.